Reading from the N-terminus, the 303-residue chain is Probable 5-dehydro-4-deoxyglucarate dehydratase (303 aa).

It belongs to the DapA family.

The catalysed reaction is 5-dehydro-4-deoxy-D-glucarate + H(+) = 2,5-dioxopentanoate + CO2 + H2O. It functions in the pathway carbohydrate acid metabolism; D-glucarate degradation; 2,5-dioxopentanoate from D-glucarate: step 2/2. In Azotobacter vinelandii (strain DJ / ATCC BAA-1303), this protein is Probable 5-dehydro-4-deoxyglucarate dehydratase.